The sequence spans 729 residues: Elongation factor 2 (729 aa).

The region spanning 19–262 (EQIRNIAIAA…MVCEHFPNPI (244 aa)) is the tr-type G domain. GTP is bound by residues 28–35 (AHVDHGKT), 94–98 (DTPGH), and 148–151 (NKVD). Residue His-597 is modified to Diphthamide.

It belongs to the TRAFAC class translation factor GTPase superfamily. Classic translation factor GTPase family. EF-G/EF-2 subfamily.

It localises to the cytoplasm. In terms of biological role, catalyzes the GTP-dependent ribosomal translocation step during translation elongation. During this step, the ribosome changes from the pre-translocational (PRE) to the post-translocational (POST) state as the newly formed A-site-bound peptidyl-tRNA and P-site-bound deacylated tRNA move to the P and E sites, respectively. Catalyzes the coordinated movement of the two tRNA molecules, the mRNA and conformational changes in the ribosome. The sequence is that of Elongation factor 2 from Halomicrobium mukohataei (strain ATCC 700874 / DSM 12286 / JCM 9738 / NCIMB 13541) (Haloarcula mukohataei).